The primary structure comprises 340 residues: Meiotic recombination protein DMC1/LIM15 homolog (340 aa).

Position 126–133 (126–133 (GEFRTGKT)) interacts with ATP. Arginine 230 contributes to the dsDNA binding site. Arginine 230, phenylalanine 233, arginine 236, arginine 242, and arginine 311 together coordinate ssDNA. DsDNA is bound by residues arginine 236 and arginine 242.

It belongs to the RecA family. DMC1 subfamily. Double stacked ring-shaped homooctamer. Interacts with BRCA2. Interacts with the MND1-PSMC3IP heterodimer. Interacts with RAD51AP1; the interaction is direct and stimulates DMC1-mediated homologous recombination. Testis.

It is found in the nucleus. The protein resides in the chromosome. Participates in meiotic recombination, specifically in homologous strand assimilation, which is required for the resolution of meiotic double-strand breaks. In Mus musculus (Mouse), this protein is Meiotic recombination protein DMC1/LIM15 homolog.